The chain runs to 259 residues: Deoxyribose-phosphate aldolase (259 aa).

D102 functions as the Proton donor/acceptor in the catalytic mechanism. K167 functions as the Schiff-base intermediate with acetaldehyde in the catalytic mechanism. Catalysis depends on K201, which acts as the Proton donor/acceptor.

The protein belongs to the DeoC/FbaB aldolase family. DeoC type 2 subfamily.

Its subcellular location is the cytoplasm. The enzyme catalyses 2-deoxy-D-ribose 5-phosphate = D-glyceraldehyde 3-phosphate + acetaldehyde. Its pathway is carbohydrate degradation; 2-deoxy-D-ribose 1-phosphate degradation; D-glyceraldehyde 3-phosphate and acetaldehyde from 2-deoxy-alpha-D-ribose 1-phosphate: step 2/2. In terms of biological role, catalyzes a reversible aldol reaction between acetaldehyde and D-glyceraldehyde 3-phosphate to generate 2-deoxy-D-ribose 5-phosphate. This chain is Deoxyribose-phosphate aldolase, found in Klebsiella pneumoniae (strain 342).